Here is a 949-residue protein sequence, read N- to C-terminus: Glycine dehydrogenase (decarboxylating) (949 aa).

K700 bears the N6-(pyridoxal phosphate)lysine mark.

Belongs to the GcvP family. The glycine cleavage system is composed of four proteins: P, T, L and H. It depends on pyridoxal 5'-phosphate as a cofactor.

The catalysed reaction is N(6)-[(R)-lipoyl]-L-lysyl-[glycine-cleavage complex H protein] + glycine + H(+) = N(6)-[(R)-S(8)-aminomethyldihydrolipoyl]-L-lysyl-[glycine-cleavage complex H protein] + CO2. The glycine cleavage system catalyzes the degradation of glycine. The P protein binds the alpha-amino group of glycine through its pyridoxal phosphate cofactor; CO(2) is released and the remaining methylamine moiety is then transferred to the lipoamide cofactor of the H protein. The chain is Glycine dehydrogenase (decarboxylating) from Flavobacterium johnsoniae (strain ATCC 17061 / DSM 2064 / JCM 8514 / BCRC 14874 / CCUG 350202 / NBRC 14942 / NCIMB 11054 / UW101) (Cytophaga johnsonae).